We begin with the raw amino-acid sequence, 896 residues long: Bifunctional glutamine synthetase adenylyltransferase/adenylyl-removing enzyme (896 aa).

The tract at residues 1–411 (MSDNRLDTAR…LFNEILSEPE (411 aa)) is adenylyl removase. The tract at residues 417–896 (NSEWQWAWQE…EVFGEEAATA (480 aa)) is adenylyl transferase.

This sequence belongs to the GlnE family. Requires Mg(2+) as cofactor.

The catalysed reaction is [glutamine synthetase]-O(4)-(5'-adenylyl)-L-tyrosine + phosphate = [glutamine synthetase]-L-tyrosine + ADP. It catalyses the reaction [glutamine synthetase]-L-tyrosine + ATP = [glutamine synthetase]-O(4)-(5'-adenylyl)-L-tyrosine + diphosphate. In terms of biological role, involved in the regulation of glutamine synthetase GlnA, a key enzyme in the process to assimilate ammonia. When cellular nitrogen levels are high, the C-terminal adenylyl transferase (AT) inactivates GlnA by covalent transfer of an adenylyl group from ATP to specific tyrosine residue of GlnA, thus reducing its activity. Conversely, when nitrogen levels are low, the N-terminal adenylyl removase (AR) activates GlnA by removing the adenylyl group by phosphorolysis, increasing its activity. The regulatory region of GlnE binds the signal transduction protein PII (GlnB) which indicates the nitrogen status of the cell. The polypeptide is Bifunctional glutamine synthetase adenylyltransferase/adenylyl-removing enzyme (Neisseria meningitidis serogroup A / serotype 4A (strain DSM 15465 / Z2491)).